A 325-amino-acid chain; its full sequence is Phospho-N-acetylmuramoyl-pentapeptide-transferase (325 aa).

10 helical membrane-spanning segments follow: residues 3–23, 48–68, 79–99, 106–126, 136–156, 174–194, 199–219, 223–243, 246–266, and 298–318; these read LMIY…PILI, GTPT…VFVV, AIFA…LKII, LKAY…GFYA, IIVP…PFII, GLAT…SYAT, LAVF…YNAY, VFMG…VAMM, LPLI…SVIL, and IVSI…LSLI.

Belongs to the glycosyltransferase 4 family. MraY subfamily. Requires Mg(2+) as cofactor.

Its subcellular location is the cell membrane. It catalyses the reaction UDP-N-acetyl-alpha-D-muramoyl-L-alanyl-gamma-D-glutamyl-meso-2,6-diaminopimeloyl-D-alanyl-D-alanine + di-trans,octa-cis-undecaprenyl phosphate = di-trans,octa-cis-undecaprenyl diphospho-N-acetyl-alpha-D-muramoyl-L-alanyl-D-glutamyl-meso-2,6-diaminopimeloyl-D-alanyl-D-alanine + UMP. It participates in cell wall biogenesis; peptidoglycan biosynthesis. Functionally, catalyzes the initial step of the lipid cycle reactions in the biosynthesis of the cell wall peptidoglycan: transfers peptidoglycan precursor phospho-MurNAc-pentapeptide from UDP-MurNAc-pentapeptide onto the lipid carrier undecaprenyl phosphate, yielding undecaprenyl-pyrophosphoryl-MurNAc-pentapeptide, known as lipid I. The protein is Phospho-N-acetylmuramoyl-pentapeptide-transferase of Clostridium novyi (strain NT).